We begin with the raw amino-acid sequence, 653 residues long: MACNLCYEAESPDEAALVYAARAYQCTLQSRTPEQVMVDFAASGPLTFQLLHILPFDSVRKRMSVVVRHPLSNQVVVYTKGADSVIMELLSVASPDGAGPEKQQMIIREKTQRHLDDYAKQGLRTLCIAKKVMSDTEYAEWLRNHFLAETSIDNREELLLESAMRLENKLTLLGATGIEDRLQEGVPESIEALHKAGIKIWMLTGDKQETAVNIAYACMLMSTILKELQKKTQALPEQVSLSVDLHQPPVPQDSGLRAGLIITGKTLEFALQESLQKQFLELTSWCQTVVCCRATPLQKSEVVKLVRSHLQVMTLAIGDGANDVSMIQVADIGIGVSGQEGMQAVMASDFAVSQFKHLSKLLLVHGHWCYTRLSNMILYFFYKNVAYVNLLFWYQFFCGFSGTSMTDYWVLIFFNLLFTSAPPVIYGVLEKDVSAETLMQLPELYKSGQKSEAYLPHTFWITLLDAFYQSLVCFFVPYFTYQGSDIDIFAFGNPLNTAALFIILLHLIIESKSLTWIHMLVITGSILSYFLFAIVFGAMCVTCNPPSNPYWIMQEHVLDPVFYLVCILTTCIALLPRFVYRGAGKMNQVTSNYANQSADKSGRRPKPGPSTVFAMKSATSCAIEQGNLSLCETALDQGYSETKAFEMARPCKD.

Over 1–375 (MACNLCYEAE…GHWCYTRLSN (375 aa)) the chain is Cytoplasmic. Residues glutamate 14, phenylalanine 56, lysine 80, arginine 124, threonine 204, glycine 205, aspartate 206, 259-266 (GLIITGKT), arginine 293, and lysine 299 contribute to the ATP site. Residue aspartate 319 participates in Mg(2+) binding. ATP-binding residues include asparagine 322 and aspartate 323. Mg(2+) is bound at residue aspartate 323. A helical transmembrane segment spans residues 376–396 (MILYFFYKNVAYVNLLFWYQF). Residues 397-407 (FCGFSGTSMTD) are Exoplasmic loop-facing. The chain crosses the membrane as a helical span at residues 408–428 (YWVLIFFNLLFTSAPPVIYGV). At 429–458 (LEKDVSAETLMQLPELYKSGQKSEAYLPHT) the chain is on the cytoplasmic side. A helical membrane pass occupies residues 459–480 (FWITLLDAFYQSLVCFFVPYFT). Over 481-487 (YQGSDID) the chain is Exoplasmic loop. Residues 488 to 510 (IFAFGNPLNTAALFIILLHLIIE) traverse the membrane as a helical segment. Topologically, residues 511-516 (SKSLTW) are cytoplasmic. Residues 517–537 (IHMLVITGSILSYFLFAIVFG) traverse the membrane as a helical segment. Over 538-555 (AMCVTCNPPSNPYWIMQE) the chain is Exoplasmic loop. The helical transmembrane segment at 556 to 580 (HVLDPVFYLVCILTTCIALLPRFVY) threads the bilayer. Topologically, residues 581–653 (RGAGKMNQVT…AFEMARPCKD (73 aa)) are cytoplasmic.

Belongs to the cation transport ATPase (P-type) (TC 3.A.3) family. Type IV subfamily. Component of a P4-ATPase flippase complex which consists of a catalytic alpha subunit ATP10A and an accessory beta subunit TMEM30A. It depends on Mg(2+) as a cofactor. Post-translationally, autophosphorylated at the conserved aspartate of the P-type ATPase signature sequence.

It localises to the cell membrane. The protein localises to the endoplasmic reticulum membrane. The enzyme catalyses ATP + H2O + phospholipidSide 1 = ADP + phosphate + phospholipidSide 2.. It catalyses the reaction a beta-D-glucosyl-(1&lt;-&gt;1')-N-acylsphing-4-enine(out) + ATP + H2O = a beta-D-glucosyl-(1&lt;-&gt;1')-N-acylsphing-4-enine(in) + ADP + phosphate + H(+). Functionally, catalytic component of a P4-ATPase flippase complex, which catalyzes the hydrolysis of ATP coupled to the transport of glucosylceramide (GlcCer) from the outer to the inner leaflet of the plasma membrane. This chain is Phospholipid-transporting ATPase VD (ATP10D), found in Macaca fascicularis (Crab-eating macaque).